The sequence spans 147 residues: MKNATFYLLDNDTTVDGLSAVEQLVCEIAAERWRSGKRVLIACEDEKQAYRLDEALWARPAESFVPHNLAGEGPRGGAPVEIAWPQKRSSSRRDILISLRTSFADFATAFTEVVDFVPYEDSLKQLARERYKAYRVAGFNLNTATWK.

This sequence belongs to the DNA polymerase III chi/HolC chain family. In terms of assembly, the DNA polymerase III holoenzyme complex contains at least 10 different subunits organized into 3 functionally essential subassemblies: the Pol III core, the beta sliding clamp processivity factor and the clamp-loading complex. The Pol III core (subunits alpha, epsilon and theta) contains the polymerase and the 3'-5' exonuclease proofreading activities. The polymerase is tethered to the template via the dimeric beta sliding clamp processivity factor. The clamp-loading complex (also called gamma complex) assembles the beta sliding clamp onto the primed template and plays a central role in the organization and communication at the replication fork. The clamp-loading complex contains delta, delta', psi and chi, and 3 copies of either or both of two different DnaX proteins, gamma and tau. The DNA replisome complex has a single clamp loader (3 tau and 1 each of delta, delta', psi and chi subunits) which binds 3 Pol III cores (1 core on the leading strand and 2 on the lagging strand) each with a beta sliding clamp dimer. Additional proteins in the replisome are other copies of gamma, psi (holD) and chi (this protein), SSB, DNA helicase and RNA primase. The clamp loader hydrolyzes ATP to assemble the beta processivity factor onto the primed template and plays a central role in the organization and communication at the replication fork. The only subunit of the DNA polymerase III holoenzyme known to interact with single-stranded DNA binding protein (SSB). Interacts directly with the psi subunit (holD). Interacts directly with DNA helicase YoaA. It binds to HolD and YoaA, but not both simultaneously.

It catalyses the reaction DNA(n) + a 2'-deoxyribonucleoside 5'-triphosphate = DNA(n+1) + diphosphate. Its function is as follows. Part of the beta sliding clamp loading complex, which hydrolyzes ATP to load the beta clamp onto primed DNA to form the DNA replication pre-initiation complex. DNA polymerase III is a complex, multichain enzyme responsible for most of the replicative synthesis in bacteria. This DNA polymerase also exhibits 3' to 5' exonuclease activity. Genetically identified as involved in the repair of replication forks and tolerance of the chain-terminating nucleoside analog 3' AZT. This subunit may stabilize YoaA and/or stimulate the helicase activity of YoaA. The polypeptide is DNA polymerase III subunit chi (Escherichia coli (strain K12)).